Consider the following 342-residue polypeptide: UDP-N-acetylglucosamine transporter YEA4 (342 aa).

At 1–6 (MWNSLK) the chain is on the cytoplasmic side. Residues 7–27 (AFALVFGGCCSNVITFETLMS) form a helical membrane-spanning segment. The Lumenal segment spans residues 28 to 35 (NETGSINN). Residues 36-56 (LITFCQFLFVTCQGLPEFLDV) form a helical membrane-spanning segment. Residues 57–61 (HQPFP) are Cytoplasmic-facing. A helical transmembrane segment spans residues 62 to 82 (YFKPLKTPLHVYVITVVLFYI). Topologically, residues 83 to 96 (SSTTNNNVFKYNIS) are lumenal. Residues 97–117 (IPIHIVFRCFGTVITMFTCWL) form a helical membrane-spanning segment. The Cytoplasmic segment spans residues 118–123 (LNGRKY). Residues 124–144 (TKIQILSTLFLTIGAIIASLF) form a helical membrane-spanning segment. The Lumenal segment spans residues 145–168 (KDADFRYQDLKLQAWKIGSDQSVD). A helical membrane pass occupies residues 169-189 (LTFIFGICILVLSSFTSSLLS). At 190–253 (AYNERTYQKY…GGKILVPREE (64 aa)) the chain is on the cytoplasmic side. Residues 254-274 (TLLLFNVLTQYFCVKGVNILA) form a helical membrane-spanning segment. At 275 to 307 (SKTNALTLSITLLVRKFISLLLSVRLFDNNLSY) the chain is on the lumenal side. A helical transmembrane segment spans residues 308–328 (TGYIGVYLVFFGAFIYSLGSI). Residues 329 to 342 (HPRQNDKGAIKKSK) lie on the Cytoplasmic side of the membrane.

The protein belongs to the nucleotide-sugar transporter family. SLC35B subfamily.

It localises to the endoplasmic reticulum. It is found in the endoplasmic reticulum membrane. In terms of biological role, sugar transporter that specifically mediates the transport of UDP-N-acetylglucosamine (UDP-GlcNAc) and is required for cell wall chitin synthesis. This chain is UDP-N-acetylglucosamine transporter YEA4 (YEA4), found in Saccharomyces cerevisiae (strain ATCC 204508 / S288c) (Baker's yeast).